Here is a 415-residue protein sequence, read N- to C-terminus: MDLSTITFLLPNSSEDTNGTSAPRLPPHSQCASVLIVLVVTVIILVTIVGNVLVVVAVFTSRALRAPQNLFLVSLAAADILVATLVIPFSLANEVMGYWYLGSTWCAFYLALDVLFCTSSIVHLCAISLDRYWSVTKAVSYNLKRTPRRIKIMITVVWVISAVISFPPLLMTKHDELECLLNNETWYILSSCIVSFFAPGLIMILVYCRIYRVAKQRASTVFVAKNGMERQPSQSETCFVRKGKSEVESPSSHSSGSRERKGELDDIDLEESSVSNRHRNSRFAKSRKVEGAQSCPKPNGRLSWACSRASELEQEPRARQLSLSKSKLAQMREKRFTFVLAVVMGVFVLCWFPFFFTYSLHAICRKSCTIPDSLFNLFFWIGYCNSSVNPIIYTIFNRDFRKAFKKIMCRHSTRT.

Residues 1 to 33 lie on the Extracellular side of the membrane; the sequence is MDLSTITFLLPNSSEDTNGTSAPRLPPHSQCAS. N-linked (GlcNAc...) asparagine glycans are attached at residues N12 and N18. The helical transmembrane segment at 34 to 58 threads the bilayer; sequence VLIVLVVTVIILVTIVGNVLVVVAV. The Cytoplasmic segment spans residues 59-70; that stretch reads FTSRALRAPQNL. The helical transmembrane segment at 71 to 96 threads the bilayer; it reads FLVSLAAADILVATLVIPFSLANEVM. The Extracellular segment spans residues 97 to 106; the sequence is GYWYLGSTWC. C106 and C179 are oxidised to a cystine. Residues 107 to 129 form a helical membrane-spanning segment; that stretch reads AFYLALDVLFCTSSIVHLCAISL. Residues 130-150 lie on the Cytoplasmic side of the membrane; that stretch reads DRYWSVTKAVSYNLKRTPRRI. The helical transmembrane segment at 151–173 threads the bilayer; that stretch reads KIMITVVWVISAVISFPPLLMTK. Residues 174–184 are Extracellular-facing; that stretch reads HDELECLLNNE. N183 is a glycosylation site (N-linked (GlcNAc...) asparagine). Residues 185–208 traverse the membrane as a helical segment; it reads TWYILSSCIVSFFAPGLIMILVYC. The Cytoplasmic segment spans residues 209–339; it reads RIYRVAKQRA…QMREKRFTFV (131 aa). Residues 234–299 form a disordered region; it reads QSETCFVRKG…EGAQSCPKPN (66 aa). Residues 276–286 show a composition bias toward basic residues; the sequence is NRHRNSRFAKS. A helical transmembrane segment spans residues 340-363; that stretch reads LAVVMGVFVLCWFPFFFTYSLHAI. Residues 364–376 are Extracellular-facing; sequence CRKSCTIPDSLFN. The helical transmembrane segment at 377 to 397 threads the bilayer; the sequence is LFFWIGYCNSSVNPIIYTIFN. The Cytoplasmic segment spans residues 398–415; sequence RDFRKAFKKIMCRHSTRT.

The protein belongs to the G-protein coupled receptor 1 family. Adrenergic receptor subfamily. ADRA2D sub-subfamily.

The protein resides in the cell membrane. Alpha-2 adrenergic receptors mediate the catecholamine-induced inhibition of adenylate cyclase through the action of G proteins. The order of potency for this receptor is dexmedetomidine &gt; norepinephrine = epinephrine &gt; oxymetazoline. The chain is Alpha-2Db adrenergic receptor (adra2db) from Danio rerio (Zebrafish).